A 367-amino-acid polypeptide reads, in one-letter code: Heparan sulfate glucosamine 3-O-sulfotransferase 2 (367 aa).

Over 1–19 the chain is Cytoplasmic; the sequence is MAYRVLGRAGPPQPRRARR. Residues 20–39 form a helical; Signal-anchor for type II membrane protein membrane-spanning segment; that stretch reads LLFAFTLSLSCTYLCYSFLC. Residues 40–367 are Lumenal-facing; sequence CCDDLGRSRL…ETVGQDFRWE (328 aa). The interval 61–110 is disordered; sequence AGGQKLLQKSRPCDPSGPTPSEPSAPSAPAAAVPAPRLSGSNHSGSPKLG. Positions 84–96 are enriched in low complexity; the sequence is SAPSAPAAAVPAP. N-linked (GlcNAc...) asparagine glycosylation occurs at Asn102. A 3'-phosphoadenylyl sulfate-binding site is contributed by 124–128; sequence KGGTR. Substrate is bound by residues 146–152 and 177–180; these read EPHFFDR and KTPS. Residue Asn193 is glycosylated (N-linked (GlcNAc...) asparagine). 3'-phosphoadenylyl sulfate-binding residues include Arg205 and Ser213. Asn235 carries an N-linked (GlcNAc...) asparagine glycan. 245–246 contributes to the substrate binding site; the sequence is WN. An N-linked (GlcNAc...) asparagine glycan is attached at Asn306. A disulfide bridge connects residues Cys313 and Cys325. A 3'-phosphoadenylyl sulfate-binding site is contributed by 330 to 334; it reads KGRTH.

It belongs to the sulfotransferase 1 family. In terms of tissue distribution, highly expressed in the brain and weakly expressed in the heart, placenta, lung and skeletal muscle.

The protein resides in the golgi apparatus membrane. It catalyses the reaction alpha-D-glucosaminyl-[heparan sulfate](n) + 3'-phosphoadenylyl sulfate = 3-sulfo-alpha-D-glucosaminyl-[heparan sulfate](n) + adenosine 3',5'-bisphosphate + H(+). Its function is as follows. Sulfotransferase that utilizes 3'-phospho-5'-adenylyl sulfate (PAPS) to catalyze the transfer of a sulfo group to an N-unsubstituted glucosamine linked to a 2-O-sulfo iduronic acid unit on heparan sulfate. Catalyzes the O-sulfation of glucosamine in GlcA2S-GlcNS. Unlike HS3ST1/3-OST-1, does not convert non-anticoagulant heparan sulfate to anticoagulant heparan sulfate. The protein is Heparan sulfate glucosamine 3-O-sulfotransferase 2 (HS3ST2) of Homo sapiens (Human).